The following is a 344-amino-acid chain: Holliday junction branch migration complex subunit RuvB (344 aa).

The interval 1–183 (MLDERLISSH…FGISCRLDFY (183 aa)) is large ATPase domain (RuvB-L). Residues isoleucine 22, arginine 23, glycine 64, lysine 67, threonine 68, threonine 69, 130 to 132 (EDY), arginine 173, tyrosine 183, and arginine 220 contribute to the ATP site. Residue threonine 68 participates in Mg(2+) binding. A small ATPAse domain (RuvB-S) region spans residues 184–254 (TPLELSEIIL…LAKWALEMLE (71 aa)). Residues 257 to 344 (ECGLDVMDRM…LEGKGLFSDA (88 aa)) are head domain (RuvB-H). Lysine 312 and arginine 317 together coordinate DNA.

This sequence belongs to the RuvB family. Homohexamer. Forms an RuvA(8)-RuvB(12)-Holliday junction (HJ) complex. HJ DNA is sandwiched between 2 RuvA tetramers; dsDNA enters through RuvA and exits via RuvB. An RuvB hexamer assembles on each DNA strand where it exits the tetramer. Each RuvB hexamer is contacted by two RuvA subunits (via domain III) on 2 adjacent RuvB subunits; this complex drives branch migration. In the full resolvosome a probable DNA-RuvA(4)-RuvB(12)-RuvC(2) complex forms which resolves the HJ.

The protein resides in the cytoplasm. It catalyses the reaction ATP + H2O = ADP + phosphate + H(+). Its function is as follows. The RuvA-RuvB-RuvC complex processes Holliday junction (HJ) DNA during genetic recombination and DNA repair, while the RuvA-RuvB complex plays an important role in the rescue of blocked DNA replication forks via replication fork reversal (RFR). RuvA specifically binds to HJ cruciform DNA, conferring on it an open structure. The RuvB hexamer acts as an ATP-dependent pump, pulling dsDNA into and through the RuvAB complex. RuvB forms 2 homohexamers on either side of HJ DNA bound by 1 or 2 RuvA tetramers; 4 subunits per hexamer contact DNA at a time. Coordinated motions by a converter formed by DNA-disengaged RuvB subunits stimulates ATP hydrolysis and nucleotide exchange. Immobilization of the converter enables RuvB to convert the ATP-contained energy into a lever motion, pulling 2 nucleotides of DNA out of the RuvA tetramer per ATP hydrolyzed, thus driving DNA branch migration. The RuvB motors rotate together with the DNA substrate, which together with the progressing nucleotide cycle form the mechanistic basis for DNA recombination by continuous HJ branch migration. Branch migration allows RuvC to scan DNA until it finds its consensus sequence, where it cleaves and resolves cruciform DNA. This is Holliday junction branch migration complex subunit RuvB from Syntrophomonas wolfei subsp. wolfei (strain DSM 2245B / Goettingen).